A 175-amino-acid polypeptide reads, in one-letter code: Cytidylate kinase (175 aa).

7–15 (GLPGSGTTT) lines the ATP pocket.

Belongs to the cytidylate kinase family. Type 2 subfamily.

The protein resides in the cytoplasm. The catalysed reaction is CMP + ATP = CDP + ADP. It catalyses the reaction dCMP + ATP = dCDP + ADP. The protein is Cytidylate kinase of Methanococcoides burtonii (strain DSM 6242 / NBRC 107633 / OCM 468 / ACE-M).